The primary structure comprises 224 residues: Ribosomal RNA small subunit methyltransferase G (224 aa).

Residues G92, L97, 143–144 (VE), and R156 contribute to the S-adenosyl-L-methionine site.

It belongs to the methyltransferase superfamily. RNA methyltransferase RsmG family.

The protein localises to the cytoplasm. It carries out the reaction guanosine(527) in 16S rRNA + S-adenosyl-L-methionine = N(7)-methylguanosine(527) in 16S rRNA + S-adenosyl-L-homocysteine. In terms of biological role, specifically methylates the N7 position of guanine in position 527 of 16S rRNA. The chain is Ribosomal RNA small subunit methyltransferase G from Albidiferax ferrireducens (strain ATCC BAA-621 / DSM 15236 / T118) (Rhodoferax ferrireducens).